The chain runs to 450 residues: Glucose-6-phosphate isomerase (450 aa).

The active-site Proton donor is the glutamate 291. Residues histidine 312 and lysine 426 contribute to the active site.

It belongs to the GPI family.

It is found in the cytoplasm. It carries out the reaction alpha-D-glucose 6-phosphate = beta-D-fructose 6-phosphate. The protein operates within carbohydrate biosynthesis; gluconeogenesis. Its pathway is carbohydrate degradation; glycolysis; D-glyceraldehyde 3-phosphate and glycerone phosphate from D-glucose: step 2/4. In terms of biological role, catalyzes the reversible isomerization of glucose-6-phosphate to fructose-6-phosphate. This Clostridium botulinum (strain Langeland / NCTC 10281 / Type F) protein is Glucose-6-phosphate isomerase.